A 253-amino-acid polypeptide reads, in one-letter code: Sulfate transporter CysZ (253 aa).

4 consecutive transmembrane segments (helical) span residues 31 to 51, 75 to 95, 151 to 171, and 222 to 242; these read FVIL…WWLF, LLWP…FSTI, IVLL…PVLW, and IPLL…AMWV.

It belongs to the CysZ family.

The protein resides in the cell inner membrane. Its function is as follows. High affinity, high specificity proton-dependent sulfate transporter, which mediates sulfate uptake. Provides the sulfur source for the cysteine synthesis pathway. The protein is Sulfate transporter CysZ of Shigella dysenteriae serotype 1 (strain Sd197).